The following is a 72-amino-acid chain: MNPSEQNHLSVEKPSQTSSGPYTSPPPIGYPTRDAMVGDPPAAAVETKSKGDGFWKGCCAAICCCCVLDACF.

Residues 1–22 (MNPSEQNHLSVEKPSQTSSGPY) show a composition bias toward polar residues. Residues 1-46 (MNPSEQNHLSVEKPSQTSSGPYTSPPPIGYPTRDAMVGDPPAAAVE) are disordered. The helical transmembrane segment at 49–65 (SKGDGFWKGCCAAICCC) threads the bilayer.

The protein belongs to the CYSTM1 family. In terms of assembly, heterodimers. Interacts with WIH1/CYSTM13. Mostly expressed in roots and flowers and, to a lower extent, in stems, siliques and leaves.

It is found in the cell membrane. It localises to the nucleus. Involved in resistance to abiotic stress. This Arabidopsis thaliana (Mouse-ear cress) protein is Protein CYSTEINE-RICH TRANSMEMBRANE MODULE 9.